Here is a 160-residue protein sequence, read N- to C-terminus: Small ribosomal subunit protein uS19v (160 aa).

It belongs to the universal ribosomal protein uS19 family.

The protein localises to the cytoplasm. This is Small ribosomal subunit protein uS19v (RPS15F) from Arabidopsis thaliana (Mouse-ear cress).